The primary structure comprises 295 residues: Reticulon-like protein 1 (295 aa).

Residues 1–50 (MSASAQHSQAQQQQQQKSCNCDLLLWRNPVQTGKYFGGSLLALLILKKVN) lie on the Cytoplasmic side of the membrane. One can recognise a Reticulon domain in the interval 20-220 (NCDLLLWRNP…ISNLVKSKTA (201 aa)). The helical transmembrane segment at 51 to 73 (LITFFLKVAYTILFTTGSIEFVS) threads the bilayer. Topologically, residues 74–142 (KLFLGQGLIT…ALFLLHKFFS (69 aa)) are lumenal. A helical transmembrane segment spans residues 143-163 (WFSIWTIVFVADIFTFTLPVI). Topologically, residues 164–295 (YHSYKHEIDA…LQNELEKNNA (132 aa)) are cytoplasmic. Residues Thr-186 and Thr-219 each carry the phosphothreonine modification. A compositionally biased stretch (polar residues) spans 219–235 (TAPVSSTAGPQTASTSK). The tract at residues 219 to 295 (TAPVSSTAGP…LQNELEKNNA (77 aa)) is disordered. Ser-232 is subject to Phosphoserine. A coiled-coil region spans residues 265–295 (STTQEFNVDELSNELKKSTKNLQNELEKNNA).

As to quaternary structure, interacts with POM33.

Its subcellular location is the endoplasmic reticulum membrane. The protein is Reticulon-like protein 1 (RTN1) of Saccharomyces cerevisiae (strain ATCC 204508 / S288c) (Baker's yeast).